The primary structure comprises 134 residues: Large ribosomal subunit protein uL18 (134 aa).

Belongs to the universal ribosomal protein uL18 family. As to quaternary structure, part of the 50S ribosomal subunit; part of the 5S rRNA/L5/L18/L25 subcomplex. Contacts the 5S and 23S rRNAs.

This is one of the proteins that bind and probably mediate the attachment of the 5S RNA into the large ribosomal subunit, where it forms part of the central protuberance. This is Large ribosomal subunit protein uL18 from Corynebacterium glutamicum (strain ATCC 13032 / DSM 20300 / JCM 1318 / BCRC 11384 / CCUG 27702 / LMG 3730 / NBRC 12168 / NCIMB 10025 / NRRL B-2784 / 534).